We begin with the raw amino-acid sequence, 220 residues long: Ribonuclease P protein subunit p29 (220 aa).

S10 bears the Phosphoserine mark.

Belongs to the eukaryotic/archaeal RNase P protein component 1 family. Component of nuclear RNase P and RNase MRP ribonucleoproteins. RNase P consists of a catalytic RNA moiety and 10 different protein chains; POP1, POP4, POP5, POP7, RPP14, RPP21, RPP25, RPP30, RPP38 and RPP40. Within the RNase P complex, POP1, POP7 and RPP25 form the 'finger' subcomplex, POP5, RPP14, RPP40 and homodimeric RPP30 form the 'palm' subcomplex, and RPP21, POP4 and RPP38 form the 'wrist' subcomplex. All subunits of the RNase P complex interact with the catalytic RNA. Several subunits of RNase P are also part of the RNase MRP complex. RNase MRP consists of a catalytic RNA moiety and about 8 protein subunits; POP1, POP7, RPP25, RPP30, RPP38, RPP40 and possibly also POP4 and POP5.

Its subcellular location is the nucleus. The protein localises to the nucleolus. Functionally, component of ribonuclease P, a ribonucleoprotein complex that generates mature tRNA molecules by cleaving their 5'-ends. This Pongo abelii (Sumatran orangutan) protein is Ribonuclease P protein subunit p29 (POP4).